Consider the following 302-residue polypeptide: Small ribosomal subunit protein uS3 (302 aa).

Residues 17–86 (IDEFFAEELA…DPQIDVQEVE (70 aa)) enclose the KH type-2 domain. A disordered region spans residues 222–302 (EDADAEDADA…EMDDEDGGAE (81 aa)).

This sequence belongs to the universal ribosomal protein uS3 family. Part of the 30S ribosomal subunit.

Its function is as follows. Binds the lower part of the 30S subunit head. The sequence is that of Small ribosomal subunit protein uS3 from Halobacterium salinarum (strain ATCC 700922 / JCM 11081 / NRC-1) (Halobacterium halobium).